We begin with the raw amino-acid sequence, 682 residues long: Solute carrier organic anion transporter family member 2B1 (682 aa).

Positions 1-30 (MPDRSTKATMGAEDIHERKVSMEPRDSHQD) are disordered. Residues 1–41 (MPDRSTKATMGAEDIHERKVSMEPRDSHQDAQPRGMFQNIK) are Cytoplasmic-facing. Positions 13 to 30 (EDIHERKVSMEPRDSHQD) are enriched in basic and acidic residues. A Phosphoserine modification is found at serine 21. A helical membrane pass occupies residues 42–61 (FFVLCHSILQLAQLMISGYL). The Extracellular portion of the chain corresponds to 62 to 80 (KSSISTVEKRFGLSSQTSG). The helical transmembrane segment at 81-101 (LLAAFNEVGNISLILFVSYFG) threads the bilayer. The Cytoplasmic portion of the chain corresponds to 102–107 (SRVHRP). A helical transmembrane segment spans residues 108–132 (RMIGCGAILVAVAGLLMALPHFISE). Residues 133-176 (PYRYDHSSPDRSQDFEASLCLPTTMAPASALSNDSCSSRTETKH) are Extracellular-facing. The N-linked (GlcNAc...) asparagine glycan is linked to asparagine 165. The chain crosses the membrane as a helical span at residues 177-206 (LTMVGIMFTAQTLLGIGGVPIQPFGISYID). Residues 207–225 (DFAHHSNSPLYLGILFAIT) are Cytoplasmic-facing. Residues 226–246 (MMGPGLAYGLGSLMLRLYVDI) form a helical membrane-spanning segment. Over 247 to 264 (DRMPEGGINLTTKDPRWV) the chain is Extracellular. Asparagine 255 is a glycosylation site (N-linked (GlcNAc...) asparagine). Residues 265–289 (GAWWLGFLISAGLVVLAASPYFFFP) traverse the membrane as a helical segment. The Cytoplasmic portion of the chain corresponds to 290–354 (REMPKEKYEL…IKVFPRVLLR (65 aa)). Phosphoserine is present on residues serine 311 and serine 314. A helical transmembrane segment spans residues 355–376 (TLRHPIFLLVVLSQVCTSSMVA). The Extracellular segment spans residues 377 to 396 (GTATFLPKFLERQFSITASF). Residues 397 to 420 (ANLLLGCLTIPLAIVGIVVGGVLV) traverse the membrane as a helical segment. The Cytoplasmic segment spans residues 421–424 (KRLH). Residues 425-448 (LSPMQCSALCLLGSLLCLLLSLPL) traverse the membrane as a helical segment. Over 449–552 (FFIGCSTHHI…SACSRLVLPF (104 aa)) the chain is Extracellular. The Kazal-like domain occupies 471-531 (PSLFPGCSEP…VFYTNCSCVA (61 aa)). 3 disulfides stabilise this stretch: cysteine 477–cysteine 508, cysteine 483–cysteine 504, and cysteine 492–cysteine 529. N-linked (GlcNAc...) asparagine glycans are attached at residues asparagine 526 and asparagine 533. The helical transmembrane segment at 553 to 575 (ILLISLGAAVASITHTPSFMLIL) threads the bilayer. Residues 576–584 (RGVKKEDKT) lie on the Cytoplasmic side of the membrane. Residues 585-610 (LAVGMQFMLLRVLAWMPSPVIHGSAI) form a helical membrane-spanning segment. Residues 611–643 (DTTCVHWALTCGRRAVCRYYDHDLLRNRFIGLQ) lie on the Extracellular side of the membrane. The chain crosses the membrane as a helical span at residues 644 to 661 (FFFKSGSLVCFALVLAIL). Residues 662–682 (RQQSREASTKATVKSSDLQEL) lie on the Cytoplasmic side of the membrane.

It belongs to the organo anion transporter (TC 2.A.60) family. Expressed in liver, kidney, heart, lung and retina. Widely distributed in all brain regions.

The protein localises to the cell membrane. It is found in the basal cell membrane. The protein resides in the apical cell membrane. It catalyses the reaction coproporphyrin III(out) = coproporphyrin III(in). The enzyme catalyses substance P(out) = substance P(in). The catalysed reaction is taurocholate(out) = taurocholate(in). It carries out the reaction prostaglandin E1(out) = prostaglandin E1(in). It catalyses the reaction prostaglandin E2(out) = prostaglandin E2(in). The enzyme catalyses prostaglandin D2(out) = prostaglandin D2(in). The catalysed reaction is leukotriene C4(out) = leukotriene C4(in). It carries out the reaction L-thyroxine(out) = L-thyroxine(in). Its function is as follows. Mediates the Na(+)-independent transport of organic anions such as taurocholate, the prostaglandins D2 (PGD2), E1 (PGE1) and E2 (PGE2), leukotriene C4, thromboxane B2 and L-thyroxine. Also plays a role in the reuptake of neuropeptides such as substance P/TAC1 and vasoactive intestinal peptide/VIP released from retinal neurons. May act as a heme transporter that promotes cellular iron availability. Also transports heme by-product coproporphyrin III (CPIII), and may be involved in their hepatic disposition. May contribute to regulate the transport of organic compounds in testis across the blood-testis-barrier. Shows a pH-sensitive substrate specificity which may be ascribed to the protonation state of the binding site and leads to a stimulation of substrate transport in an acidic microenvironment. The exact transport mechanism has not been yet deciphered but most likely involves an anion exchange, coupling the cellular uptake of organic substrate with the efflux of an anionic compound. Hydrogencarbonate/HCO3(-) acts as a probable counteranion that exchanges for organic anions. Cytoplasmic glutamate may also act as counteranion in the placenta. This Rattus norvegicus (Rat) protein is Solute carrier organic anion transporter family member 2B1.